A 203-amino-acid chain; its full sequence is Urease accessory protein UreG (203 aa).

14 to 21 contributes to the GTP binding site; sequence GPVGSGKT.

This sequence belongs to the SIMIBI class G3E GTPase family. UreG subfamily. Homodimer. UreD, UreF and UreG form a complex that acts as a GTP-hydrolysis-dependent molecular chaperone, activating the urease apoprotein by helping to assemble the nickel containing metallocenter of UreC. The UreE protein probably delivers the nickel.

Its subcellular location is the cytoplasm. In terms of biological role, facilitates the functional incorporation of the urease nickel metallocenter. This process requires GTP hydrolysis, probably effectuated by UreG. This chain is Urease accessory protein UreG, found in Rhizobium johnstonii (strain DSM 114642 / LMG 32736 / 3841) (Rhizobium leguminosarum bv. viciae).